Reading from the N-terminus, the 470-residue chain is Neuraminidase (470 aa).

Topologically, residues 1–6 (MNPNQK) are intravirion. The chain crosses the membrane as a helical span at residues 7–27 (IITIGSISIAIGIISLMLQIG). An involved in apical transport and lipid raft association region spans residues 11 to 33 (GSISIAIGIISLMLQIGNIISIW). At 28–470 (NIISIWASHS…GAELPFTIDK (443 aa)) the chain is on the virion surface side. The hypervariable stalk region stretch occupies residues 36–90 (HSIQTGSQNHTGICNQRIITYENSTWVNHTYVNINNTNVVAGKDKTSVTLAGNSS). N-linked (GlcNAc...) asparagine; by host glycans are attached at residues asparagine 44, asparagine 58, asparagine 63, asparagine 70, and asparagine 88. The tract at residues 91–470 (LCSISGWAIY…GAELPFTIDK (380 aa)) is head of neuraminidase. Intrachain disulfides connect cysteine 92–cysteine 417, cysteine 124–cysteine 129, cysteine 184–cysteine 231, cysteine 233–cysteine 238, cysteine 279–cysteine 292, cysteine 281–cysteine 290, cysteine 318–cysteine 335, and cysteine 421–cysteine 447. Residue arginine 118 participates in substrate binding. Asparagine 146 carries N-linked (GlcNAc...) asparagine; by host glycosylation. Aspartate 151 functions as the Proton donor/acceptor in the catalytic mechanism. Arginine 152 lines the substrate pocket. Asparagine 235 is a glycosylation site (N-linked (GlcNAc...) asparagine; by host). Residue 277 to 278 (EE) coordinates substrate. Residue arginine 293 coordinates substrate. Positions 294, 298, and 324 each coordinate Ca(2+). Arginine 368 contacts substrate. Tyrosine 402 serves as the catalytic Nucleophile. Asparagine 434 and asparagine 455 each carry an N-linked (GlcNAc...) asparagine; by host glycan.

This sequence belongs to the glycosyl hydrolase 34 family. As to quaternary structure, homotetramer. Ca(2+) is required as a cofactor. Post-translationally, N-glycosylated.

It localises to the virion membrane. The protein resides in the host apical cell membrane. It catalyses the reaction Hydrolysis of alpha-(2-&gt;3)-, alpha-(2-&gt;6)-, alpha-(2-&gt;8)- glycosidic linkages of terminal sialic acid residues in oligosaccharides, glycoproteins, glycolipids, colominic acid and synthetic substrates.. With respect to regulation, inhibited by the neuraminidase inhibitors zanamivir (Relenza) and oseltamivir (Tamiflu). These drugs interfere with the release of progeny virus from infected cells and are effective against all influenza strains. Resistance to neuraminidase inhibitors is quite rare. In terms of biological role, catalyzes the removal of terminal sialic acid residues from viral and cellular glycoconjugates. Cleaves off the terminal sialic acids on the glycosylated HA during virus budding to facilitate virus release. Additionally helps virus spread through the circulation by further removing sialic acids from the cell surface. These cleavages prevent self-aggregation and ensure the efficient spread of the progeny virus from cell to cell. Otherwise, infection would be limited to one round of replication. Described as a receptor-destroying enzyme because it cleaves a terminal sialic acid from the cellular receptors. May facilitate viral invasion of the upper airways by cleaving the sialic acid moieties on the mucin of the airway epithelial cells. Likely to plays a role in the budding process through its association with lipid rafts during intracellular transport. May additionally display a raft-association independent effect on budding. Plays a role in the determination of host range restriction on replication and virulence. Sialidase activity in late endosome/lysosome traffic seems to enhance virus replication. The polypeptide is Neuraminidase (Aves (Human)).